Consider the following 215-residue polypeptide: LexA repressor (215 aa).

A DNA-binding region (H-T-H motif) is located at residues R28 to R48. Catalysis depends on for autocatalytic cleavage activity residues S133 and K170.

This sequence belongs to the peptidase S24 family. In terms of assembly, homodimer.

The catalysed reaction is Hydrolysis of Ala-|-Gly bond in repressor LexA.. Functionally, represses a number of genes involved in the response to DNA damage (SOS response), including recA and lexA. In the presence of single-stranded DNA, RecA interacts with LexA causing an autocatalytic cleavage which disrupts the DNA-binding part of LexA, leading to derepression of the SOS regulon and eventually DNA repair. The chain is LexA repressor from Burkholderia ambifaria (strain MC40-6).